Here is a 221-residue protein sequence, read N- to C-terminus: Capsid protein (221 aa).

The disordered stretch occupies residues 1–24 (MSSSQKKAGGKAGKPTKRSQNYAA). Serine 2 is subject to N-acetylserine; by host.

The protein belongs to the alphamovirus/ilarvirus capsid protein family.

It is found in the virion. Its function is as follows. Capsid protein. Binds to the to the 3' end of the nonpolyadenylated viral RNA and is involved in viral RNA translation initiation. Probably binds RNA and plays a role in packaging. This chain is Capsid protein, found in Alfalfa mosaic virus (AMV).